A 266-amino-acid chain; its full sequence is 4-diphosphocytidyl-2-C-methyl-D-erythritol kinase (266 aa).

Residue Lys11 is part of the active site. ATP is bound at residue 103 to 113 (PTFAGLGGGSS). Residue Asp145 is part of the active site.

This sequence belongs to the GHMP kinase family. IspE subfamily.

The enzyme catalyses 4-CDP-2-C-methyl-D-erythritol + ATP = 4-CDP-2-C-methyl-D-erythritol 2-phosphate + ADP + H(+). Its pathway is isoprenoid biosynthesis; isopentenyl diphosphate biosynthesis via DXP pathway; isopentenyl diphosphate from 1-deoxy-D-xylulose 5-phosphate: step 3/6. Its function is as follows. Catalyzes the phosphorylation of the position 2 hydroxy group of 4-diphosphocytidyl-2C-methyl-D-erythritol. The protein is 4-diphosphocytidyl-2-C-methyl-D-erythritol kinase of Sulfurimonas denitrificans (strain ATCC 33889 / DSM 1251) (Thiomicrospira denitrificans (strain ATCC 33889 / DSM 1251)).